The chain runs to 109 residues: MTMARNWRDIRADAVAQGRVDLQRAAVAREEMRDAVLAHRLAEIRKALGHARQADVAALMGVSQARVSKLESGDLSHTELGTLQAYVAALGGHLRIVAEFGENTVELTA.

The 57-residue stretch at 41–97 (LAEIRKALGHARQADVAALMGVSQARVSKLESGDLSHTELGTLQAYVAALGGHLRIV) folds into the HTH cro/C1-type domain. Positions 53-72 (QADVAALMGVSQARVSKLES) form a DNA-binding region, H-T-H motif.

Functionally, putative antitoxin component of a type II toxin-antitoxin (TA) system. Its cognate toxin would be HigB3. The chain is Putative antitoxin HigA3 from Mycobacterium tuberculosis (strain ATCC 25618 / H37Rv).